We begin with the raw amino-acid sequence, 227 residues long: Lipoprotein-releasing system ATP-binding protein LolD (227 aa).

The ABC transporter domain occupies 7–227 (LKLTGVERHY…TISDGKVVEF (221 aa)). 43 to 50 (APSGTGKS) is a binding site for ATP.

Belongs to the ABC transporter superfamily. Lipoprotein translocase (TC 3.A.1.125) family. As to quaternary structure, the complex is composed of two ATP-binding proteins (LolD) and two transmembrane proteins (LolC and LolE).

The protein localises to the cell inner membrane. Its function is as follows. Part of the ABC transporter complex LolCDE involved in the translocation of mature outer membrane-directed lipoproteins, from the inner membrane to the periplasmic chaperone, LolA. Responsible for the formation of the LolA-lipoprotein complex in an ATP-dependent manner. The polypeptide is Lipoprotein-releasing system ATP-binding protein LolD (Rhizobium etli (strain ATCC 51251 / DSM 11541 / JCM 21823 / NBRC 15573 / CFN 42)).